Reading from the N-terminus, the 377-residue chain is Cyclin-I (377 aa).

Residues 357–377 are disordered; the sequence is DLSRQEGHASPCPPLQPVSVM. A compositionally biased stretch (pro residues) spans 367-377; it reads PCPPLQPVSVM.

It belongs to the cyclin family. In terms of tissue distribution, highest levels in adult heart, brain and skeletal muscle. Lower levels in adult placenta, lung, kidney and pancreas. Also high levels in fetal brain and lower levels in fetal lung, liver and kidney. Also abundant in testis and thyroid.

The protein resides in the nucleus membrane. This chain is Cyclin-I, found in Homo sapiens (Human).